The sequence spans 472 residues: Ribosomal protein uS12 methylthiotransferase RimO (472 aa).

The 114-residue stretch at 1-114 folds into the MTTase N-terminal domain; sequence MKFHIITLGC…IGDVVDTLQR (114 aa). Residues cysteine 10, cysteine 46, cysteine 78, cysteine 171, cysteine 175, and cysteine 178 each contribute to the [4Fe-4S] cluster site. The Radical SAM core domain maps to 157–388; it reads RITGPSAYLK…MRLQQGISRQ (232 aa). The TRAM domain maps to 391 to 460; it reads RRWVGRVIRV…DYDLWGEMVE (70 aa).

It belongs to the methylthiotransferase family. RimO subfamily. It depends on [4Fe-4S] cluster as a cofactor.

The protein localises to the cytoplasm. It carries out the reaction L-aspartate(89)-[ribosomal protein uS12]-hydrogen + (sulfur carrier)-SH + AH2 + 2 S-adenosyl-L-methionine = 3-methylsulfanyl-L-aspartate(89)-[ribosomal protein uS12]-hydrogen + (sulfur carrier)-H + 5'-deoxyadenosine + L-methionine + A + S-adenosyl-L-homocysteine + 2 H(+). Functionally, catalyzes the methylthiolation of an aspartic acid residue of ribosomal protein uS12. The protein is Ribosomal protein uS12 methylthiotransferase RimO of Roseiflexus sp. (strain RS-1).